We begin with the raw amino-acid sequence, 275 residues long: Polyamine aminopropyltransferase (275 aa).

The region spanning 2-235 is the PABS domain; the sequence is ELWFTEKQTK…GLWTFTIGSK (234 aa). Gln31 lines the S-methyl-5'-thioadenosine pocket. Spermidine contacts are provided by His62 and Asp86. Residues Glu106 and 137-138 contribute to the S-methyl-5'-thioadenosine site; that span reads DG. Residue Asp155 is the Proton acceptor of the active site. 155-158 serves as a coordination point for spermidine; sequence DSTE. S-methyl-5'-thioadenosine is bound at residue Pro162.

It belongs to the spermidine/spermine synthase family. Homodimer or homotetramer.

It localises to the cytoplasm. The catalysed reaction is S-adenosyl 3-(methylsulfanyl)propylamine + putrescine = S-methyl-5'-thioadenosine + spermidine + H(+). The protein operates within amine and polyamine biosynthesis; spermidine biosynthesis; spermidine from putrescine: step 1/1. In terms of biological role, catalyzes the irreversible transfer of a propylamine group from the amino donor S-adenosylmethioninamine (decarboxy-AdoMet) to putrescine (1,4-diaminobutane) to yield spermidine. This Bacillus cereus (strain ATCC 10987 / NRS 248) protein is Polyamine aminopropyltransferase.